Here is a 196-residue protein sequence, read N- to C-terminus: Large ribosomal subunit protein bL9 (196 aa).

It belongs to the bacterial ribosomal protein bL9 family.

Its function is as follows. Binds to the 23S rRNA. In Bradyrhizobium sp. (strain ORS 278), this protein is Large ribosomal subunit protein bL9.